We begin with the raw amino-acid sequence, 396 residues long: Metacaspase-1 (396 aa).

Gly residues predominate over residues methionine 1–glutamine 20. Positions methionine 1–glycine 86 are disordered. Positions histidine 47–glutamine 62 are enriched in low complexity. Positions glutamine 72–glutamine 81 are enriched in polar residues. Active-site residues include histidine 186 and cysteine 242.

This sequence belongs to the peptidase C14B family.

Its function is as follows. Involved in cell death (apoptosis). The polypeptide is Metacaspase-1 (MCA1) (Pyricularia oryzae (strain 70-15 / ATCC MYA-4617 / FGSC 8958) (Rice blast fungus)).